The chain runs to 512 residues: Ferredoxin--nitrite reductase (512 aa).

The [4Fe-4S] cluster site is built by Cys-396, Cys-402, Cys-437, and Cys-441. Siroheme is bound at residue Cys-441.

This sequence belongs to the nitrite and sulfite reductase 4Fe-4S domain family.

The catalysed reaction is 6 oxidized [2Fe-2S]-[ferredoxin] + NH4(+) + 2 H2O = nitrite + 6 reduced [2Fe-2S]-[ferredoxin] + 8 H(+). This is Ferredoxin--nitrite reductase (nirA) from Synechococcus elongatus (strain ATCC 33912 / PCC 7942 / FACHB-805) (Anacystis nidulans R2).